Here is a 200-residue protein sequence, read N- to C-terminus: Pyrrolidone-carboxylate peptidase (200 aa).

Residues glutamate 78, cysteine 141, and histidine 165 contribute to the active site.

The protein belongs to the peptidase C15 family. As to quaternary structure, homotetramer.

The protein resides in the cytoplasm. It carries out the reaction Release of an N-terminal pyroglutamyl group from a polypeptide, the second amino acid generally not being Pro.. Functionally, removes 5-oxoproline from various penultimate amino acid residues except L-proline. This Lactobacillus acidophilus (strain ATCC 700396 / NCK56 / N2 / NCFM) protein is Pyrrolidone-carboxylate peptidase.